Consider the following 237-residue polypeptide: Putative biotin ligase (237 aa).

Residues 1–191 (MEIIHLSEID…KKYKKYSITI (191 aa)) enclose the BPL/LPL catalytic domain.

It belongs to the biotin--protein ligase family.

It catalyses the reaction biotin + L-lysyl-[protein] + ATP = N(6)-biotinyl-L-lysyl-[protein] + AMP + diphosphate + H(+). This chain is Putative biotin ligase, found in Methanocaldococcus jannaschii (strain ATCC 43067 / DSM 2661 / JAL-1 / JCM 10045 / NBRC 100440) (Methanococcus jannaschii).